Consider the following 476-residue polypeptide: Adenosylhomocysteinase (476 aa).

Substrate is bound by residues Thr67, Asp142, and Glu202. 203-205 (TTT) provides a ligand contact to NAD(+). The substrate site is built by Lys232 and Asp236. Residues Asn237, 266-271 (GYGDVG), Glu289, Asn324, 345-347 (IGH), and Asn390 each bind NAD(+).

The protein belongs to the adenosylhomocysteinase family. Requires NAD(+) as cofactor.

It is found in the cytoplasm. It carries out the reaction S-adenosyl-L-homocysteine + H2O = L-homocysteine + adenosine. Its pathway is amino-acid biosynthesis; L-homocysteine biosynthesis; L-homocysteine from S-adenosyl-L-homocysteine: step 1/1. Functionally, may play a key role in the regulation of the intracellular concentration of adenosylhomocysteine. This chain is Adenosylhomocysteinase, found in Synechococcus sp. (strain CC9902).